We begin with the raw amino-acid sequence, 291 residues long: Elongation factor Ts (291 aa).

Residues 80–83 (TDFV) are involved in Mg(2+) ion dislocation from EF-Tu.

This sequence belongs to the EF-Ts family.

The protein localises to the cytoplasm. Associates with the EF-Tu.GDP complex and induces the exchange of GDP to GTP. It remains bound to the aminoacyl-tRNA.EF-Tu.GTP complex up to the GTP hydrolysis stage on the ribosome. This is Elongation factor Ts from Ligilactobacillus salivarius (strain UCC118) (Lactobacillus salivarius).